The sequence spans 351 residues: GDSL esterase/lipase At3g14820 (351 aa).

Residues M1–A22 form the signal peptide. N25 carries an N-linked (GlcNAc...) asparagine glycan. The Nucleophile role is filled by S39. Catalysis depends on residues D325 and H328.

Belongs to the 'GDSL' lipolytic enzyme family.

Its subcellular location is the secreted. This Arabidopsis thaliana (Mouse-ear cress) protein is GDSL esterase/lipase At3g14820.